Reading from the N-terminus, the 429-residue chain is Glutamate-1-semialdehyde 2,1-aminomutase (429 aa).

Lys265 carries the post-translational modification N6-(pyridoxal phosphate)lysine.

Belongs to the class-III pyridoxal-phosphate-dependent aminotransferase family. HemL subfamily. In terms of assembly, homodimer. It depends on pyridoxal 5'-phosphate as a cofactor.

It is found in the cytoplasm. The catalysed reaction is (S)-4-amino-5-oxopentanoate = 5-aminolevulinate. The protein operates within porphyrin-containing compound metabolism; protoporphyrin-IX biosynthesis; 5-aminolevulinate from L-glutamyl-tRNA(Glu): step 2/2. This Shewanella halifaxensis (strain HAW-EB4) protein is Glutamate-1-semialdehyde 2,1-aminomutase.